The sequence spans 263 residues: Indole-3-glycerol phosphate synthase (263 aa).

This sequence belongs to the TrpC family.

The catalysed reaction is 1-(2-carboxyphenylamino)-1-deoxy-D-ribulose 5-phosphate + H(+) = (1S,2R)-1-C-(indol-3-yl)glycerol 3-phosphate + CO2 + H2O. It participates in amino-acid biosynthesis; L-tryptophan biosynthesis; L-tryptophan from chorismate: step 4/5. This chain is Indole-3-glycerol phosphate synthase, found in Desulfosudis oleivorans (strain DSM 6200 / JCM 39069 / Hxd3) (Desulfococcus oleovorans).